A 386-amino-acid chain; its full sequence is Bifunctional enzyme IspD/IspF (386 aa).

A 2-C-methyl-D-erythritol 4-phosphate cytidylyltransferase region spans residues 1–231 (MKNGAVIIPA…REKKEPMQKI (231 aa)). The segment at 232 to 386 (RIGHGFDAHQ…SCHAVVLLQQ (155 aa)) is 2-C-methyl-D-erythritol 2,4-cyclodiphosphate synthase. The a divalent metal cation site is built by aspartate 238 and histidine 240. 4-CDP-2-C-methyl-D-erythritol 2-phosphate is bound by residues 238 to 240 (DAH) and 264 to 265 (HS). Residue histidine 272 participates in a divalent metal cation binding. Residues 286-288 (DIG), 362-365 (TTTE), tyrosine 369, and arginine 372 each bind 4-CDP-2-C-methyl-D-erythritol 2-phosphate.

The protein in the N-terminal section; belongs to the IspD/TarI cytidylyltransferase family. IspD subfamily. This sequence in the C-terminal section; belongs to the IspF family. A divalent metal cation serves as cofactor.

The catalysed reaction is 2-C-methyl-D-erythritol 4-phosphate + CTP + H(+) = 4-CDP-2-C-methyl-D-erythritol + diphosphate. It carries out the reaction 4-CDP-2-C-methyl-D-erythritol 2-phosphate = 2-C-methyl-D-erythritol 2,4-cyclic diphosphate + CMP. It functions in the pathway isoprenoid biosynthesis; isopentenyl diphosphate biosynthesis via DXP pathway; isopentenyl diphosphate from 1-deoxy-D-xylulose 5-phosphate: step 2/6. Its pathway is isoprenoid biosynthesis; isopentenyl diphosphate biosynthesis via DXP pathway; isopentenyl diphosphate from 1-deoxy-D-xylulose 5-phosphate: step 4/6. Functionally, bifunctional enzyme that catalyzes the formation of 4-diphosphocytidyl-2-C-methyl-D-erythritol from CTP and 2-C-methyl-D-erythritol 4-phosphate (MEP) (IspD), and catalyzes the conversion of 4-diphosphocytidyl-2-C-methyl-D-erythritol 2-phosphate (CDP-ME2P) to 2-C-methyl-D-erythritol 2,4-cyclodiphosphate (ME-CPP) with a corresponding release of cytidine 5-monophosphate (CMP) (IspF). This is Bifunctional enzyme IspD/IspF from Desulfotalea psychrophila (strain LSv54 / DSM 12343).